The sequence spans 570 residues: Dual specificity testis-specific protein kinase 2 (570 aa).

One can recognise a Protein kinase domain in the interval 58 to 313 (DFTREKIGSG…EIGKTLKEIM (256 aa)). ATP is bound by residues 64–72 (IGSGFFSEV) and lysine 87. Aspartate 176 functions as the Proton acceptor in the catalytic mechanism. Position 219 is a phosphoserine; by autocatalysis (serine 219). Residues 316–327 (LPEEELERDRKL) are compositionally biased toward basic and acidic residues. The segment at 316 to 357 (LPEEELERDRKLQPTAKGPLEKVPGGKRLSSLDDKIPHKSPR) is disordered. 3 positions are modified to phosphoserine: serine 369, serine 456, and serine 460. Residues 511 to 530 (AMDCSNPQEENGFGPRLKGT) are disordered.

This sequence belongs to the protein kinase superfamily. TKL Ser/Thr protein kinase family. Requires Mg(2+) as cofactor. Mn(2+) serves as cofactor.

It is found in the nucleus. The enzyme catalyses L-seryl-[protein] + ATP = O-phospho-L-seryl-[protein] + ADP + H(+). It carries out the reaction L-threonyl-[protein] + ATP = O-phospho-L-threonyl-[protein] + ADP + H(+). The catalysed reaction is L-tyrosyl-[protein] + ATP = O-phospho-L-tyrosyl-[protein] + ADP + H(+). Its activity is regulated as follows. Activated by autophosphorylation on Ser-219. In terms of biological role, dual specificity protein kinase activity catalyzing autophosphorylation and phosphorylation of exogenous substrates on both serine/threonine and tyrosine residues. Phosphorylates cofilin at 'Ser-3'. May play an important role in spermatogenesis. This Mus musculus (Mouse) protein is Dual specificity testis-specific protein kinase 2 (Tesk2).